The chain runs to 890 residues: Kinesin-like protein KIF20A (890 aa).

N-acetylserine is present on serine 2. Phosphoserine is present on residues serine 7, serine 14, and serine 21. A Kinesin motor domain is found at lysine 64–leucine 507. Glycine 160–threonine 167 lines the ATP pocket. Position 528 is a phosphoserine; by PLK1 (serine 528). Serine 532, serine 662, serine 668, serine 685, and serine 825 each carry phosphoserine. Positions leucine 611–cysteine 762 form a coiled coil. Residues cysteine 763–tyrosine 890 form a globular region. The tract at residues threonine 832–aspartate 865 is disordered. The residue at position 857 (threonine 857) is a Phosphothreonine. Serine 867, serine 878, and serine 883 each carry phosphoserine.

This sequence belongs to the TRAFAC class myosin-kinesin ATPase superfamily. Kinesin family. Post-translationally, phosphorylated by PLK1 at Ser-528 during mitosis, creating a docking site for PLK1 and recruiting PLK1 at central spindle.

The protein localises to the golgi apparatus. It localises to the cytoplasm. The protein resides in the cytoskeleton. It is found in the spindle. Its function is as follows. Mitotic kinesin required for chromosome passenger complex (CPC)-mediated cytokinesis. Following phosphorylation by PLK1, involved in recruitment of PLK1 to the central spindle. Interacts with guanosine triphosphate (GTP)-bound forms of RAB6A and RAB6B. May act as a motor required for the retrograde RAB6 regulated transport of Golgi membranes and associated vesicles along microtubules. Has a microtubule plus end-directed motility. The protein is Kinesin-like protein KIF20A (KIF20A) of Homo sapiens (Human).